The primary structure comprises 361 residues: Chorismate synthase (361 aa).

NADP(+) contacts are provided by Arg-48 and Arg-54. FMN-binding positions include 125 to 127 (RSS), 238 to 239 (NA), Gly-278, 293 to 297 (KPTSS), and Arg-319.

It belongs to the chorismate synthase family. Homotetramer. Requires FMNH2 as cofactor.

It carries out the reaction 5-O-(1-carboxyvinyl)-3-phosphoshikimate = chorismate + phosphate. It participates in metabolic intermediate biosynthesis; chorismate biosynthesis; chorismate from D-erythrose 4-phosphate and phosphoenolpyruvate: step 7/7. In terms of biological role, catalyzes the anti-1,4-elimination of the C-3 phosphate and the C-6 proR hydrogen from 5-enolpyruvylshikimate-3-phosphate (EPSP) to yield chorismate, which is the branch point compound that serves as the starting substrate for the three terminal pathways of aromatic amino acid biosynthesis. This reaction introduces a second double bond into the aromatic ring system. The polypeptide is Chorismate synthase (Salmonella arizonae (strain ATCC BAA-731 / CDC346-86 / RSK2980)).